Here is a 152-residue protein sequence, read N- to C-terminus: SsrA-binding protein (152 aa).

The protein belongs to the SmpB family.

It localises to the cytoplasm. Required for rescue of stalled ribosomes mediated by trans-translation. Binds to transfer-messenger RNA (tmRNA), required for stable association of tmRNA with ribosomes. tmRNA and SmpB together mimic tRNA shape, replacing the anticodon stem-loop with SmpB. tmRNA is encoded by the ssrA gene; the 2 termini fold to resemble tRNA(Ala) and it encodes a 'tag peptide', a short internal open reading frame. During trans-translation Ala-aminoacylated tmRNA acts like a tRNA, entering the A-site of stalled ribosomes, displacing the stalled mRNA. The ribosome then switches to translate the ORF on the tmRNA; the nascent peptide is terminated with the 'tag peptide' encoded by the tmRNA and targeted for degradation. The ribosome is freed to recommence translation, which seems to be the essential function of trans-translation. The sequence is that of SsrA-binding protein from Helicobacter pylori (strain J99 / ATCC 700824) (Campylobacter pylori J99).